The chain runs to 235 residues: MATPSSATSLNVENIVFPSSVKPPGDTNTLFLGGAGVRGMEIQGNFVKFTGIGVYLEDKAIPLLAGKWKGKTAEELVNSVEFFRDIVTGPFKKFTQVTMILPLTGKQYSEKVSEMCVGVWKAHGTYTDADGATIDKFLEVFKDENFPPGASILFTTSPDGSLTISFSKDGMIPEAANIVLENEKLAQAVIESVIGKNGVSPATKQSLASRLADLMNHFDEKATTDAEPNLSKNGL.

Substrate-binding residues include threonine 50 and serine 192.

The protein belongs to the chalcone isomerase family.

The catalysed reaction is a chalcone = a flavanone.. The protein operates within secondary metabolite biosynthesis; flavonoid biosynthesis. In terms of biological role, catalyzes the intramolecular cyclization of bicyclic chalcones into tricyclic (S)-flavanones. Responsible for the isomerization of 4,2',4',6'-tetrahydroxychalcone (also termed chalcone) into naringenin. The chain is Chalcone--flavanone isomerase 1 (CHI1) from Chrysanthemum morifolium (Florist's daisy).